The following is a 132-amino-acid chain: Glycine cleavage system H protein (132 aa).

Residues 24–106 (RVRVGITDYA…YGAGWLFELE (83 aa)) form the Lipoyl-binding domain. Lys-65 is modified (N6-lipoyllysine).

The protein belongs to the GcvH family. In terms of assembly, the glycine cleavage system is composed of four proteins: P, T, L and H. The cofactor is (R)-lipoate.

Functionally, the glycine cleavage system catalyzes the degradation of glycine. The H protein shuttles the methylamine group of glycine from the P protein to the T protein. In Nocardia farcinica (strain IFM 10152), this protein is Glycine cleavage system H protein.